A 154-amino-acid polypeptide reads, in one-letter code: uncharacterized protein (154 aa).

The interval 104–124 (NNNNNDNDNNNKEKEDNDEKE) is disordered. The segment covering 112-124 (NNNKEKEDNDEKE) has biased composition (basic and acidic residues).

This is an uncharacterized protein from Dictyostelium discoideum (Social amoeba).